Here is a 217-residue protein sequence, read N- to C-terminus: Cytidylate kinase (217 aa).

ATP is bound at residue 11–19; the sequence is GPAGAGKST.

It belongs to the cytidylate kinase family. Type 1 subfamily.

It localises to the cytoplasm. It catalyses the reaction CMP + ATP = CDP + ADP. The catalysed reaction is dCMP + ATP = dCDP + ADP. This Clostridium perfringens (strain ATCC 13124 / DSM 756 / JCM 1290 / NCIMB 6125 / NCTC 8237 / Type A) protein is Cytidylate kinase.